A 458-amino-acid polypeptide reads, in one-letter code: Preferentially expressed antigen in melanoma-like protein 1 (458 aa).

Residues 99-126 form an LRR 1; degenerate repeat; the sequence is RCKLQVLDLRVMPLKLWNRLPVFGTAGC. The LRR 2; degenerate repeat unit spans residues 176–200; sequence SLCCCKLQIWAMSMYYHRKLLEILD. The stretch at 201-227 is one LRR 3; degenerate repeat; that stretch reads LDSVQELRMYCISNPVCLLNFAPYLGR. An LRR 4; degenerate repeat occupies 228–263; that stretch reads MRNLRCLILSHLWQTFSMTPVEKQQVITQFTSQFLK. 5 LRR repeats span residues 264-289, 290-321, 322-340, 346-373, and 374-398; these read LKCL…FWWL, KTPL…SQLK, HLNL…PLRV, ASTL…ALRC, and CTQL…LAYN.

The protein belongs to the PRAME family. In terms of tissue distribution, specifically expressed in testis (at protein level).

It is found in the cytoplasm. Its subcellular location is the cytoplasmic vesicle. The protein localises to the secretory vesicle. The protein resides in the acrosome. It localises to the cell projection. It is found in the cilium. Its subcellular location is the flagellum. May play a role in acrosome development and also in sperm maturation and motility. The polypeptide is Preferentially expressed antigen in melanoma-like protein 1 (Mus musculus (Mouse)).